Reading from the N-terminus, the 398-residue chain is Phosphoglycerate kinase (398 aa).

Substrate is bound by residues 21–23 (DFN), Arg-36, 59–62 (HLGR), Arg-119, and Arg-157. ATP-binding positions include Lys-208, Gly-296, Glu-327, and 354-357 (GGDS).

The protein belongs to the phosphoglycerate kinase family. Monomer.

The protein localises to the cytoplasm. It catalyses the reaction (2R)-3-phosphoglycerate + ATP = (2R)-3-phospho-glyceroyl phosphate + ADP. It participates in carbohydrate degradation; glycolysis; pyruvate from D-glyceraldehyde 3-phosphate: step 2/5. This chain is Phosphoglycerate kinase, found in Streptococcus pneumoniae serotype 2 (strain D39 / NCTC 7466).